The following is a 559-amino-acid chain: Nicotinate phosphoribosyltransferase 1 (559 aa).

Nicotinate-binding residues include Y33 and T221. Residue H224 is modified to Phosphohistidine. Residue R331 participates in nicotinate binding. T393 lines the 5-phospho-alpha-D-ribose 1-diphosphate pocket.

Belongs to the NAPRTase family. It depends on Mg(2+) as a cofactor. Requires Mn(2+) as cofactor. Post-translationally, transiently phosphorylated on a His residue during the reaction cycle. Phosphorylation strongly increases the affinity for substrates and increases the rate of nicotinate D-ribonucleotide production. Dephosphorylation regenerates the low-affinity form of the enzyme, leading to product release.

It catalyses the reaction nicotinate + 5-phospho-alpha-D-ribose 1-diphosphate + ATP + H2O = nicotinate beta-D-ribonucleotide + ADP + phosphate + diphosphate. The protein operates within cofactor biosynthesis; NAD(+) biosynthesis; nicotinate D-ribonucleotide from nicotinate: step 1/1. Its function is as follows. Catalyzes the first step in the biosynthesis of NAD from nicotinic acid, the ATP-dependent synthesis of beta-nicotinate D-ribonucleotide from nicotinate and 5-phospho-D-ribose 1-phosphate. Helps prevent cellular oxidative stress via its role in NAD biosynthesis. In Arabidopsis thaliana (Mouse-ear cress), this protein is Nicotinate phosphoribosyltransferase 1.